The following is a 195-amino-acid chain: MADPVRLIVGLGNPGREYEDTRHNAGVWYVDALARRQGVFLTEDKKYFGLTATFSFEGETIRLLVPTTFMNRSGQATAALANFFKIPVTQILVAHDELDLPPGCARFKQGGGHGGHNGLRDIISRHGNSRDFYRLRLGIGHPGSADRVTPHVLSKPSKADRDLIDRAIDEAVHNTADMLRGDLNSAMNRLNGFKA.

Tyrosine 18 contributes to the tRNA binding site. Catalysis depends on histidine 23, which acts as the Proton acceptor. Positions 69, 71, and 117 each coordinate tRNA.

It belongs to the PTH family. As to quaternary structure, monomer.

The protein resides in the cytoplasm. The enzyme catalyses an N-acyl-L-alpha-aminoacyl-tRNA + H2O = an N-acyl-L-amino acid + a tRNA + H(+). Functionally, hydrolyzes ribosome-free peptidyl-tRNAs (with 1 or more amino acids incorporated), which drop off the ribosome during protein synthesis, or as a result of ribosome stalling. Catalyzes the release of premature peptidyl moieties from peptidyl-tRNA molecules trapped in stalled 50S ribosomal subunits, and thus maintains levels of free tRNAs and 50S ribosomes. The polypeptide is Peptidyl-tRNA hydrolase (Alcanivorax borkumensis (strain ATCC 700651 / DSM 11573 / NCIMB 13689 / SK2)).